A 403-amino-acid chain; its full sequence is Homoserine O-succinyltransferase (403 aa).

The 309-residue stretch at 58-366 folds into the AB hydrolase-1 domain; the sequence is NAVLICHALS…ESNHGHDAFL (309 aa). The active-site Nucleophile is Ser164. Arg234 contacts substrate. Residues Asp329 and His362 contribute to the active site. Asp363 serves as a coordination point for substrate.

The protein belongs to the AB hydrolase superfamily. MetX family. Homodimer.

It localises to the cytoplasm. The enzyme catalyses L-homoserine + succinyl-CoA = O-succinyl-L-homoserine + CoA. Its pathway is amino-acid biosynthesis; L-methionine biosynthesis via de novo pathway; O-succinyl-L-homoserine from L-homoserine: step 1/1. Transfers a succinyl group from succinyl-CoA to L-homoserine, forming succinyl-L-homoserine. The protein is Homoserine O-succinyltransferase of Halothiobacillus neapolitanus (strain ATCC 23641 / c2) (Thiobacillus neapolitanus).